The chain runs to 83 residues: MTSNNFGDANHQLDAIGLRCPEPVMMVRLSIRNMQLGETLAISADDHSTTRDIPSFCRFMGHTLIASDVDSKPYRYLIRKDQS.

Cys-20 acts as the Cysteine persulfide intermediate in catalysis.

This sequence belongs to the sulfur carrier protein TusA family.

The protein localises to the cytoplasm. Functionally, sulfur carrier protein which probably makes part of a sulfur-relay system. The polypeptide is Sulfur carrier protein TusA (Pseudoalteromonas atlantica (strain T6c / ATCC BAA-1087)).